A 503-amino-acid chain; its full sequence is ATP synthase subunit alpha (503 aa).

Gly-169–Thr-176 serves as a coordination point for ATP.

Belongs to the ATPase alpha/beta chains family. In terms of assembly, F-type ATPases have 2 components, CF(1) - the catalytic core - and CF(0) - the membrane proton channel. CF(1) has five subunits: alpha(3), beta(3), gamma(1), delta(1), epsilon(1). CF(0) has three main subunits: a(1), b(2) and c(9-12). The alpha and beta chains form an alternating ring which encloses part of the gamma chain. CF(1) is attached to CF(0) by a central stalk formed by the gamma and epsilon chains, while a peripheral stalk is formed by the delta and b chains.

The protein localises to the cell membrane. It catalyses the reaction ATP + H2O + 4 H(+)(in) = ADP + phosphate + 5 H(+)(out). Its function is as follows. Produces ATP from ADP in the presence of a proton gradient across the membrane. The alpha chain is a regulatory subunit. This chain is ATP synthase subunit alpha, found in Ligilactobacillus salivarius (strain UCC118) (Lactobacillus salivarius).